Reading from the N-terminus, the 106-residue chain is Large ribosomal subunit protein eL42 (106 aa).

This sequence belongs to the eukaryotic ribosomal protein eL42 family.

The protein resides in the cytoplasm. The polypeptide is Large ribosomal subunit protein eL42 (RPL44) (Trypanosoma brucei brucei).